The primary structure comprises 957 residues: Glycine dehydrogenase (decarboxylating) (957 aa).

At lysine 708 the chain carries N6-(pyridoxal phosphate)lysine.

Belongs to the GcvP family. As to quaternary structure, the glycine cleavage system is composed of four proteins: P, T, L and H. The cofactor is pyridoxal 5'-phosphate.

The catalysed reaction is N(6)-[(R)-lipoyl]-L-lysyl-[glycine-cleavage complex H protein] + glycine + H(+) = N(6)-[(R)-S(8)-aminomethyldihydrolipoyl]-L-lysyl-[glycine-cleavage complex H protein] + CO2. Its function is as follows. The glycine cleavage system catalyzes the degradation of glycine. The P protein binds the alpha-amino group of glycine through its pyridoxal phosphate cofactor; CO(2) is released and the remaining methylamine moiety is then transferred to the lipoamide cofactor of the H protein. The chain is Glycine dehydrogenase (decarboxylating) from Escherichia coli O8 (strain IAI1).